The sequence spans 2153 residues: MEGPSRVYLFGDQTSDIEAGLRRLLQAKNSTIVQSFFQQCFHAIRQEIAKLPPSHRKLFPRFTSIVDLLSRSRESGPSPVLESALTCIYQLGCFIHFYGDLGHDYPTPSNSHLVGLCTGVLSCTAVSCARNVGELIPAAVESVVIALRLGICVFRVRELVDSADSESTCWSALVSGISEAEASHLIDEYSSKKATPPSSKPYISAVSSNGVTVSAPPTVLDEFVETCISKNYKPVKAPIHGPYHAPHLYDDKDIDRILQQSSALEGLTGCSPVIPIISSNTGKPIKAKSIKDLFKVALEEILLRRLCWDKVTESCTSVCKTGTNHSCKLFPISSSATQSLFTVLKKAGVSISLETGVGEIATNPEMRNLTGKAENSKIAIIGMSGRFPDSDGTESFWNLLYKGLDVHRKVPADRWDVDAHVDMTGSKRNTSKVAYGCWINEPGLFDPRFFNMSPREALQADPAQRLALLTAYEALEMAGFIPDSSPSTQRDRVGIFYGMTSDDYREINSGQDIDTYFIPGGNRAFTPGRINYYFKFSGPSVSVDTACSSSLAAIHMACNSIWRNDCDAAITGGVNILTSPDNHAGLDRGHFLSTTGNCNTFDDGADGYCRADGVGSIVLKRLEDAEADNDPILAVINGAYTNHSAEAVSITRPHVGAQAFIFNKLLNDANIDPKDVSYVEMHGTGTQAGDAVEMQSVLDVFAPDYRRGPGQSLHIGSAKANIGHGESASGVTALVKVLLMMRENMIPPHCGIKTKINSNFPTDLAKRNVHIAFQPTPWNRPASGKRRTFVNNFSAAGGNTALLLEDAPIPERQGQDPRSFHLVSVSARSQSALKNNVEALVKYIDSQGKSFGVKETEFLPNLAYTTTARRIHHPFRVIAVGANLQSLRDSLHGALHRETYTPVPSTAPGIGFVFTGQGAQYSGMGKELYRSCFQFRTTIEHFDCIARSQGLPSILPLVDGSVAVEELSPVVVQVGTTCVQMALVNYWTALGVKPAFIIGHSLGDYAALNTAGVLSTSDTIYLCGRRAQLLTKECKIGTHSMLAIKASLAEVKHFLRDELHEVSCVNAPAETVVSGLVADIDELAQKCSTEGLKSTKLKVPYAFHSSQVDPILEAFEDIAQGVTFHKPTTPFVSALFGEVITDANWECLGPKYLRDHCRKTVNFLGGVEATRHAKLTNDKTLWVEIGSHTICSGMIKATLGPQVTTVASLRREEDTWKVLSNSLASLHLAGIDINWKQYHQDFSSSLQVLRLPAYKWDLKNYWIPYTNNFCLSKGAPVATVAAGPQHEYLTTAAQKVIETRSDGATATVVIENDIADPELNRVIQGHKVNGTALCPSSLYADISQTLAEYLIKKYKPEYDGLGLDVCEVTVPRPLIAKGGQQLFRVSATADWAEKKTTLQIYSVTAEGKKTADHATCTVRFFDCAAAEAEWKRVSYLVKRSIDRLHDIAENGDAHRLGRGMVYKLFAALVDYDDNFKSIREVILDSEQHEATARVKFQAPQGNFHRNPFWIDSFGHLSGFIMNASDATDSKNQVFVNHGWDSMRCLKKFSPDVTYRTYVRMQPWKDSIWAGDVYVFDGDDIVAVYGAVKFQALSRKILDTVLPPVGASKGPARPAASAQKAAPAAAASKSRASAPAPAKPAAKPSAPSLVKRALTILAEEVGLSESEITDDLVFADYGVDSLLSLTVTGRYREELDIDLESSIFIDQPTVKDFKQFLAPMSQGEASDGSTSDPESSSSFNGGSSTDESSAGSPVSSPPNEKVTQVEQHATIKEIRAILADEIGVTEEELKDDENLGEMGMDSLLSLTVLGRIRETLDLDLPGEFFIENQTLNDVEDALGLKPKAAPAPAPAPAPVPAPVSAPILKEPVPNANSTIMARASPHPRSTSILLQGNPKTATKTLFLFPDGSGSATSYATIPGVSPDVCVYGLNCPYMKTPEKLKYPLAEMTFPYLAEIRRRQPKGPYNFGGWSAGGICAYDAARYLILEEGEQVDRLLLLDSPFPIGLEKLPTRLYGFINSMGLFGEGNKAPPAWLLPHFLAFIDSLDTYKAVPLPFDDPKWAKKMPKTFMVWAKDGICSKPDDPWPEPDPDGKPDTREMVWLLKNRTDMGPNKWDTLVGPQNVGGITVIEGANHFTMTLGPKAKELGSFIGNAMAN.

An N-terminal acylcarrier protein transacylase domain (SAT) region spans residues 8-244 (YLFGDQTSDI…VKAPIHGPYH (237 aa)). Positions 375-806 (NSKIAIIGMS…GGNTALLLED (432 aa)) constitute a Ketosynthase family 3 (KS3) domain. Active-site for beta-ketoacyl synthase activity residues include Cys-547, His-682, and His-724. Residues 912 to 1232 (FVFTGQGAQY…LASLHLAGID (321 aa)) are malonyl-CoA:ACP transacylase (MAT) domain. Catalysis depends on Ser-1001, which acts as the For acyl/malonyl transferase activity. The interval 1286-1425 (HEYLTTAAQK…CTVRFFDCAA (140 aa)) is N-terminal hotdog fold. A PKS/mFAS DH domain is found at 1286–1598 (HEYLTTAAQK…FQALSRKILD (313 aa)). The product template (PT) domain stretch occupies residues 1290 to 1603 (TTAAQKVIET…RKILDTVLPP (314 aa)). The active-site Proton acceptor; for dehydratase activity is the His-1326. Residues 1452 to 1598 (DAHRLGRGMV…FQALSRKILD (147 aa)) are C-terminal hotdog fold. The Proton donor; for dehydratase activity role is filled by Asp-1511. The disordered stretch occupies residues 1608–1643 (KGPARPAASAQKAAPAAAASKSRASAPAPAKPAAKP). Residues 1610 to 1643 (PARPAASAQKAAPAAAASKSRASAPAPAKPAAKP) show a composition bias toward low complexity. The 78-residue stretch at 1643–1720 (PSAPSLVKRA…DFKQFLAPMS (78 aa)) folds into the Carrier 1 domain. At Ser-1680 the chain carries O-(pantetheine 4'-phosphoryl)serine. The interval 1720–1765 (SQGEASDGSTSDPESSSSFNGGSSTDESSAGSPVSSPPNEKVTQVE) is disordered. Low complexity predominate over residues 1725-1748 (SDGSTSDPESSSSFNGGSSTDESS). Polar residues predominate over residues 1749 to 1765 (AGSPVSSPPNEKVTQVE). Residues 1764–1841 (VEQHATIKEI…DVEDALGLKP (78 aa)) enclose the Carrier 2 domain. At Ser-1801 the chain carries O-(pantetheine 4'-phosphoryl)serine. Residues 1879 to 2151 (SPHPRSTSIL…ELGSFIGNAM (273 aa)) form a claisen cyclase domain region. The For Claisen cyclase activity role is filled by Ser-1969.

It catalyses the reaction 6 malonyl-CoA + acetyl-CoA + 6 H(+) = naphtopyrone YWA1 + 6 CO2 + 7 CoA + H2O. Its pathway is secondary metabolite biosynthesis. In terms of biological role, non-reducing polyketide synthase; part of the gene cluster that mediates the biosynthesis of aurasperone B, a dimeric gamma-naphthopyrone. The first step in the biosynthesis of aurasperone B is the production of gamma-naphthopyrone precursor YWA1 by the non-reducing polyketide synthase albA, via condensation of one acetyl-CoA starter unit with 6 malonyl-CoA units. YWA1 is then methylated by aunE at position C-6 to yield foncesin which is further methylated at position C-8 by aunD to produce fonsecin B. A key enzyme in the biosynthetic pathway is the cytochrome P450 monooxygenase aunB which catalyzes the oxidative dimerization of fonsecin B to aurasperone B. AunB also catalyzes the oxidative dimerization of rubrofusarin B into aurasperone A. The sequence is that of Non-reducing polyketide synthase albA from Aspergillus niger (strain ATCC MYA-4892 / CBS 513.88 / FGSC A1513).